A 157-amino-acid chain; its full sequence is Capsid protein (157 aa).

Ser2 carries the N-acetylserine; by host modification.

It belongs to the virgaviridae capsid protein family.

The protein resides in the virion. Functionally, capsid protein self-assembles to form rod-shaped virions about 18 nm in diameter with a central canal enclosing the viral genomic RNA. In Tomato mosaic virus (strain Korean) (ToMV), this protein is Capsid protein (CP).